We begin with the raw amino-acid sequence, 600 residues long: Single-strand DNA endonuclease 1 (600 aa).

The interval 1–97 (MGVKYLWDVL…KRRLKARFEI (97 aa)) is N-domain. The segment at 2–97 (GVKYLWDVLE…KRRLKARFEI (96 aa)) is XPG-N domain. Mg(2+)-binding residues include aspartate 30, aspartate 76, glutamate 142, glutamate 144, aspartate 163, aspartate 165, and aspartate 215. The XPG-I domain stretch occupies residues 130–215 (STLGILCLDG…IALALLLGSD (86 aa)). I-domain stretches follow at residues 130 to 218 (STLG…DYSQ) and 130 to 219 (STLG…YSQG). The 5'-3' exonuclease domain stretch occupies residues 215-353 (DYSQGVRGLR…ILPKVAERNL (139 aa)). Residues 433–458 (MAAKKKKPKPKQKQKETSSPTKSSSL) form a disordered region. Over residues 435–444 (AKKKKPKPKQ) the composition is skewed to basic residues.

The protein belongs to the XPG/RAD2 endonuclease family. GEN subfamily. Mg(2+) serves as cofactor.

The protein localises to the nucleus. Endonuclease which cleaves flap structures at the junction between single-stranded DNA and double-stranded DNA with a specific cleavage site in the 5' overhang strand exactly one nucleotide 3' of the branch point. Structure- and sequence-specific nuclease that resolves holliday junctions (HJs) by symmetrically oriented incisions in two opposing strands near the junction point, thus leading to ligatable products; HJs are physical links between homologous DNA molecules that arise as central intermediary structures during homologous recombination and repair in meiotic and somatic cells. Structure-specific nuclease with 5'-flap endonuclease activity, preferentially cleaving static flaps 5' overhang strand exactly one nucleotide in the 3' direction of the branch point and, to lower extent, on the two neighboring positions. Also able to cleave double-stranded flap strand 1 one nucleotide in the 3' direction of the branch point. Together with MUS81, essential for the resolution of toxic replication structures to ensure genome stability, and to maintain telomere integrity and replication. This is Single-strand DNA endonuclease 1 from Arabidopsis thaliana (Mouse-ear cress).